The primary structure comprises 122 residues: Large ribosomal subunit protein uL18 (122 aa).

The protein belongs to the universal ribosomal protein uL18 family. In terms of assembly, part of the 50S ribosomal subunit; part of the 5S rRNA/L5/L18/L25 subcomplex. Contacts the 5S and 23S rRNAs.

This is one of the proteins that bind and probably mediate the attachment of the 5S RNA into the large ribosomal subunit, where it forms part of the central protuberance. This chain is Large ribosomal subunit protein uL18, found in Syntrophotalea carbinolica (strain DSM 2380 / NBRC 103641 / GraBd1) (Pelobacter carbinolicus).